Here is a 246-residue protein sequence, read N- to C-terminus: Phosphonates import ATP-binding protein PhnC (246 aa).

Residues 2 to 246 (IKFENVSKVY…ILDEVYRKEG (245 aa)) form the ABC transporter domain. 35–42 (GTSGAGKS) serves as a coordination point for ATP.

It belongs to the ABC transporter superfamily. Phosphonates importer (TC 3.A.1.9.1) family. As to quaternary structure, the complex is composed of two ATP-binding proteins (PhnC), two transmembrane proteins (PhnE) and a solute-binding protein (PhnD).

It localises to the cell membrane. It carries out the reaction phosphonate(out) + ATP + H2O = phosphonate(in) + ADP + phosphate + H(+). In terms of biological role, part of the ABC transporter complex PhnCDE involved in phosphonates import. Responsible for energy coupling to the transport system. In Lactococcus lactis subsp. cremoris (strain SK11), this protein is Phosphonates import ATP-binding protein PhnC.